A 417-amino-acid chain; its full sequence is MARKIGSRYTAHQILGRGSAGTVWLGEGPDGPVAIKLLREDLASDQELVSRFVQERTALLGLDHPHVVSVRDLVVDGNDLALVMDLVRGTDLRTRLDRERRLAPEAAVAVVADVADGLAAAHAAGVVHRDVKPENVLLDMQGPLGPGGSHPALLTDFGVAKLIDTPRRTRATKIIGTPDYLAPEIVEGLPPRAAVDIYALATVLYELLAGFTPFGGGHPGAVLRRHVTETVVPLPGIPDELWQLLVQCLAKAPASRLRASELSARLRELLPMLAGMAPLDVDEPDAEQPEDAPDASAASPAAPVSTAEPVRRRGAVPLVPGAKPADSNRDTHTSMRVPAPDELAGGARGTARAPRASGAPRPGSARNRAATRRRRIAVGAGAVALVAAIGVGTWLATGGDEDGGGPQDTRNSAPAAP.

The Protein kinase domain occupies 9-270 (YTAHQILGRG…ELSARLRELL (262 aa)). Residues 15-23 (LGRGSAGTV) and K36 each bind ATP. D130 serves as the catalytic Proton acceptor. Disordered stretches follow at residues 279–371 (LDVD…RAAT) and 395–417 (LATGGDEDGGGPQDTRNSAPAAP). The segment covering 280–293 (DVDEPDAEQPEDAP) has biased composition (acidic residues). Low complexity-rich tracts occupy residues 294–308 (DASAASPAAPVSTAE) and 349–368 (GTARAPRASGAPRPGSARNR). The span at 408–417 (DTRNSAPAAP) shows a compositional bias: polar residues.

Belongs to the protein kinase superfamily. Ser/Thr protein kinase family. Post-translationally, autophosphorylated mainly at Thr.

It catalyses the reaction L-seryl-[protein] + ATP = O-phospho-L-seryl-[protein] + ADP + H(+). It carries out the reaction L-threonyl-[protein] + ATP = O-phospho-L-threonyl-[protein] + ADP + H(+). The chain is Serine/threonine-protein kinase PkaB (pkaB) from Streptomyces coelicolor (strain ATCC BAA-471 / A3(2) / M145).